The following is a 221-amino-acid chain: MALPNQQTVDYPSFKLVIVGDGGTGKTTFVKRHLTGEFEKKYEPTIGVEVHPLDFFTNCGKIRFYCWDTAGQEKFGGLRDGYYIHGQCAIIMFDVTARLTYKNVPTWHRDLCRVCENIPIVLCGNKVDVKNRQVKAKQVTFHRKKNLQYYEISAKSNYNFEKPFLYLARKLAGDGNLHFVESPALAPPEVQIDLAAQALHEQELQAALNQPLPDDDDEAFE.

Positions 10–174 constitute a Small GTPase Ran-type domain; the sequence is DYPSFKLVIV…LYLARKLAGD (165 aa). A GTP-binding site is contributed by 21–28; that stretch reads DGGTGKTT. Positions 40–48 are switch-I; that stretch reads KKYEPTIGV. GTP contacts are provided by residues G71, 125–128, and 153–155; these read NKVD and SAK. The segment at 71–87 is switch-II; it reads GQEKFGGLRDGYYIHGQ.

It belongs to the small GTPase superfamily. Ran family. In terms of assembly, found in a nuclear export complex with RanGTP, exportin and pre-miRNA.

It localises to the nucleus. In terms of biological role, GTP-binding protein involved in nucleocytoplasmic transport. Required for the import of protein into the nucleus and also for RNA export. Involved in chromatin condensation and control of cell cycle. The protein is GTP-binding nuclear protein Ran2 (RAN2) of Solanum lycopersicum (Tomato).